Consider the following 93-residue polypeptide: DNA-directed RNA polymerase subunit Rpo11 (93 aa).

This sequence belongs to the archaeal Rpo11/eukaryotic RPB11/RPC19 RNA polymerase subunit family. Part of the RNA polymerase complex.

It is found in the cytoplasm. It catalyses the reaction RNA(n) + a ribonucleoside 5'-triphosphate = RNA(n+1) + diphosphate. Its function is as follows. DNA-dependent RNA polymerase (RNAP) catalyzes the transcription of DNA into RNA using the four ribonucleoside triphosphates as substrates. In Sulfurisphaera tokodaii (strain DSM 16993 / JCM 10545 / NBRC 100140 / 7) (Sulfolobus tokodaii), this protein is DNA-directed RNA polymerase subunit Rpo11.